A 747-amino-acid chain; its full sequence is Ubiquitin carboxyl-terminal hydrolase 13 (747 aa).

In terms of domain architecture, USP spans 140-668; that stretch reads FGYENFGNTC…TAYVLFYKAM (529 aa). Cys149 acts as the Nucleophile in catalysis. Disordered regions lie at residues 172-305 and 318-367; these read PKKS…RPPD and YENP…RKKS. A compositionally biased stretch (basic and acidic residues) spans 174-183; that stretch reads KSRESDQPRK. Ser198 is modified (phosphoserine). The span at 225–235 shows a compositional bias: polar residues; that stretch reads PVNSVNSNTAG. Residues 251–260 show a composition bias toward basic and acidic residues; that stretch reads HVQDNNKKEG. A compositionally biased stretch (polar residues) spans 319–343; it reads ENPSRGSSNSNNLDLKGESNSSLST. His619 acts as the Proton acceptor in catalysis.

It belongs to the peptidase C19 family.

The catalysed reaction is Thiol-dependent hydrolysis of ester, thioester, amide, peptide and isopeptide bonds formed by the C-terminal Gly of ubiquitin (a 76-residue protein attached to proteins as an intracellular targeting signal).. The polypeptide is Ubiquitin carboxyl-terminal hydrolase 13 (UBP13) (Saccharomyces cerevisiae (strain ATCC 204508 / S288c) (Baker's yeast)).